The sequence spans 186 residues: ADP-ribosylation factor-like protein 6 (186 aa).

Residue glycine 2 is the site of N-myristoyl glycine attachment. GTP contacts are provided by residues 24–31, 69–73, and 130–133; these read GLDNSGKT, DMSGQ, and NKMD.

Belongs to the small GTPase superfamily. Arf family. In terms of assembly, interacts with SEC61B, ARL6IP1, ARL6IP2, ARL6IP3, ARL6IP4 ARL6IP5 and ARL6IP6. Interacts (GTP-bound form) with the BBSome a complex that contains BBS1, BBS2, BBS4, BBS5, BBS7, BBS8/TTC8, BBS9 and BBIP10. Interacts (GTP-free form) with IFT27.

Its subcellular location is the cell projection. It is found in the cilium membrane. The protein resides in the cytoplasm. The protein localises to the cytoskeleton. It localises to the cilium axoneme. Its subcellular location is the cilium basal body. Its function is as follows. Involved in membrane protein trafficking at the base of the ciliary organelle. Mediates recruitment onto plasma membrane of the BBSome complex which would constitute a coat complex required for sorting of specific membrane proteins to the primary cilia. Together with the BBSome complex and LTZL1, controls SMO ciliary trafficking and contributes to the sonic hedgehog (SHH) pathway regulation. May regulate cilia assembly and disassembly and subsequent ciliary signaling events such as the Wnt signaling cascade. Isoform 2 may be required for proper retinal function and organization. The sequence is that of ADP-ribosylation factor-like protein 6 (ARL6) from Bos taurus (Bovine).